A 103-amino-acid chain; its full sequence is Phorbol-12-myristate-13-acetate-induced protein 1 (103 aa).

2 consecutive short sequence motifs (BH3) follow at residues 27-35 and 78-86; these read LRKIGDKVY and LRRIGDKVN. Positions 90–99 are required for mitochondrial location; that stretch reads KLLNLISKLF.

The protein belongs to the PMAIP1 family. Interacts with MCL1. Interacts with BCL2A1. Interacts with BAX. Interacts with BCL2L10. Detected in thymocytes after irradiation with X-rays. Not detectable in untreated thymocytes (at protein level). Detected in embryonic neural precursor cells of the telencephalon Constitutively expressed at low levels in adult brain, testis, thymus, spleen, lung and kidney.

The protein localises to the mitochondrion. Its function is as follows. Promotes activation of caspases and apoptosis. Promotes mitochondrial membrane changes and efflux of apoptogenic proteins from the mitochondria. Contributes to p53/TP53-dependent apoptosis after radiation exposure. Promotes proteasomal degradation of MCL1. Competes with BIM/BCL2L11 for binding to MCL1 and can displace BIM/BCL2L11 from its binding site on MCL1. Competes with BAK1 for binding to MCL1 and can displace BAK1 from its binding site on MCL1. This Mus musculus (Mouse) protein is Phorbol-12-myristate-13-acetate-induced protein 1 (Pmaip1).